Here is a 529-residue protein sequence, read N- to C-terminus: Peptide chain release factor 3 (529 aa).

A tr-type G domain is found at 11 to 280 (NSRRTFAIIS…AFINWAPEPK (270 aa)). GTP contacts are provided by residues 20 to 27 (SHPDAGKT), 88 to 92 (DTPGH), and 142 to 145 (NKMD).

Belongs to the TRAFAC class translation factor GTPase superfamily. Classic translation factor GTPase family. PrfC subfamily.

The protein localises to the cytoplasm. In terms of biological role, increases the formation of ribosomal termination complexes and stimulates activities of RF-1 and RF-2. It binds guanine nucleotides and has strong preference for UGA stop codons. It may interact directly with the ribosome. The stimulation of RF-1 and RF-2 is significantly reduced by GTP and GDP, but not by GMP. This Acinetobacter baylyi (strain ATCC 33305 / BD413 / ADP1) protein is Peptide chain release factor 3.